We begin with the raw amino-acid sequence, 258 residues long: uncharacterized protein (258 aa).

The signal sequence occupies residues 1–20 (MKCFQKLYIFILILIVLMAG). Cys21 carries N-palmitoyl cysteine lipidation. Residue Cys21 is the site of S-diacylglycerol cysteine attachment.

The protein belongs to the staphylococcal tandem lipoprotein family.

The protein resides in the cell membrane. This is an uncharacterized protein from Staphylococcus aureus (strain COL).